The following is a 389-amino-acid chain: Flap endonuclease 1 (389 aa).

Positions 1–105 (MGIKGLNKLL…GELAKRKERR (105 aa)) are N-domain. Asp34 is a binding site for Mg(2+). Residues Arg47 and Arg71 each coordinate DNA. 5 residues coordinate Mg(2+): Asp87, Glu170, Glu172, Asp191, and Asp193. Residues 134–265 (DVTRFEKRTV…QTALKLMKEH (132 aa)) are I-domain. Position 170 (Glu170) interacts with DNA. DNA-binding residues include Gly243 and Asp245. Mg(2+) is bound at residue Asp245. Positions 351–359 (PQARLDGFF) are interaction with PCNA. The tract at residues 360–389 (KVMPKEGGEKRKADDKKTKGKKPATKKAKK) is disordered. A compositionally biased stretch (basic and acidic residues) spans 362 to 376 (MPKEGGEKRKADDKK). Positions 377-389 (TKGKKPATKKAKK) are enriched in basic residues.

The protein belongs to the XPG/RAD2 endonuclease family. FEN1 subfamily. Interacts with PCNA. Three molecules of FEN1 bind to one PCNA trimer with each molecule binding to one PCNA monomer. PCNA stimulates the nuclease activity without altering cleavage specificity. Mg(2+) is required as a cofactor. Post-translationally, phosphorylated. Phosphorylation upon DNA damage induces relocalization to the nuclear plasma.

The protein resides in the nucleus. It localises to the nucleolus. Its subcellular location is the nucleoplasm. It is found in the mitochondrion. Functionally, structure-specific nuclease with 5'-flap endonuclease and 5'-3' exonuclease activities involved in DNA replication and repair. During DNA replication, cleaves the 5'-overhanging flap structure that is generated by displacement synthesis when DNA polymerase encounters the 5'-end of a downstream Okazaki fragment. It enters the flap from the 5'-end and then tracks to cleave the flap base, leaving a nick for ligation. Also involved in the long patch base excision repair (LP-BER) pathway, by cleaving within the apurinic/apyrimidinic (AP) site-terminated flap. Acts as a genome stabilization factor that prevents flaps from equilibrating into structures that lead to duplications and deletions. Also possesses 5'-3' exonuclease activity on nicked or gapped double-stranded DNA, and exhibits RNase H activity. Also involved in replication and repair of rDNA and in repairing mitochondrial DNA. This chain is Flap endonuclease 1, found in Yarrowia lipolytica (strain CLIB 122 / E 150) (Yeast).